The chain runs to 150 residues: Urease accessory protein UreE (150 aa).

Belongs to the UreE family.

The protein localises to the cytoplasm. In terms of biological role, involved in urease metallocenter assembly. Binds nickel. Probably functions as a nickel donor during metallocenter assembly. In Streptococcus salivarius (strain 57.I), this protein is Urease accessory protein UreE.